Reading from the N-terminus, the 42-residue chain is Gastric inhibitory polypeptide (42 aa).

Belongs to the glucagon family.

Its subcellular location is the secreted. Functionally, potent stimulator of insulin secretion and relatively poor inhibitor of gastric acid secretion. The protein is Gastric inhibitory polypeptide (GIP) of Sus scrofa (Pig).